Consider the following 414-residue polypeptide: Serine/threonine transporter SstT (414 aa).

The Cytoplasmic segment spans residues 2 to 15 (TTQHSPGLFRRLAH). Residues 16–36 (GSLVKQILAGLILGILLAWIS) form a helical membrane-spanning segment. Residues 37–45 (KPAAEAVGL) lie on the Periplasmic side of the membrane. The chain crosses the membrane as a helical span at residues 46 to 66 (LGTLFVGALKAVAPILVLMLV). Residues 67–83 (MASIANHQHGQKTNIRP) are Cytoplasmic-facing. The chain crosses the membrane as a helical span at residues 84–104 (ILFLYLLGTFSAALAAVIFSF). Topologically, residues 105–142 (AFPSTLHLSSSAGDISPPSGIVEVMRGLVMSMVSNPID) are periplasmic. A helical transmembrane segment spans residues 143–163 (ALLKGNYIGILVWAIGLGFAL). At 164 to 179 (RHGNETTKNLVNDMSN) the chain is on the cytoplasmic side. Residues 180–200 (AVTFMVKLVIHFAPIGIFGLV) form a helical membrane-spanning segment. The Periplasmic portion of the chain corresponds to 201 to 217 (SSTLATTGFSTLWGYAQ). Residues 218–238 (LLVVLVGCMLLVALVVNPLLV) form a helical membrane-spanning segment. Over 239-299 (WWKIRRNPFP…VSIPLGATIN (61 aa)) the chain is Cytoplasmic. The helical transmembrane segment at 300–320 (MAGAAITITVLTLAAVNTLGI) threads the bilayer. Over 321–331 (PVDLPTALLLS) the chain is Periplasmic. Residues 332–352 (VVASLCACGASGVAGGSLLLI) form a helical membrane-spanning segment. Over 353–414 (PLACNMFGIS…DRLANSALRN (62 aa)) the chain is Cytoplasmic.

The protein belongs to the dicarboxylate/amino acid:cation symporter (DAACS) (TC 2.A.23) family.

It localises to the cell inner membrane. The enzyme catalyses L-serine(in) + Na(+)(in) = L-serine(out) + Na(+)(out). It catalyses the reaction L-threonine(in) + Na(+)(in) = L-threonine(out) + Na(+)(out). Its function is as follows. Involved in the import of serine and threonine into the cell, with the concomitant import of sodium (symport system). The chain is Serine/threonine transporter SstT from Escherichia coli (strain UTI89 / UPEC).